A 295-amino-acid polypeptide reads, in one-letter code: Glutamyl-Q tRNA(Asp) synthetase (295 aa).

L-glutamate contacts are provided by residues 9 to 13 (RFAPT) and E45. The 'HIGH' region signature appears at 12-22 (PTPSGYLHFGS). 4 residues coordinate Zn(2+): C101, C103, Y115, and C119. Y172 and R190 together coordinate L-glutamate. Positions 228–232 (KLGKS) match the 'KMSKS' region motif. ATP is bound at residue K231.

The protein belongs to the class-I aminoacyl-tRNA synthetase family. GluQ subfamily. Zn(2+) is required as a cofactor.

Functionally, catalyzes the tRNA-independent activation of glutamate in presence of ATP and the subsequent transfer of glutamate onto a tRNA(Asp). Glutamate is transferred on the 2-amino-5-(4,5-dihydroxy-2-cyclopenten-1-yl) moiety of the queuosine in the wobble position of the QUC anticodon. This is Glutamyl-Q tRNA(Asp) synthetase from Pseudomonas syringae pv. tomato (strain ATCC BAA-871 / DC3000).